The chain runs to 402 residues: MDTKAFKRSLQQSENYHRKGFGQEDEAMGVMNSEYQSSLIQEIRNNNYRLTQGDVTIRLAEAFGFCWGVERAVAMSYETRQHFPNQRIWLTNEVIHNPSVNQRLRDMKVEFIPVIEDQKDFSVVERDDVVILPAFGASVTEMQLLNDKGCTIVDTTCPWVAKVWNSVEKHKKRNYTSIIHGKYKHEETVATSSFAGTYLVVLNMEQAKYVCNYILNGGDKQEFLAKFKKAYSEGFDPDTDLERVGIANQTTMLKSETEEIGKLFEHTMLKKYGPLDLNNHFMSFNTICDATQERQDAMLDLVKEKLDLMVVIGGFNSSNTTHLQEISIHHGIVSYHIDSAARIDLNNHIEHKPLGKDLEVKENWLPDGKIVVGVTSGASTPDIVVEQVLQKIFAIKSAVAMV.

Cys-66 serves as a coordination point for [4Fe-4S] cluster. His-96 lines the (2E)-4-hydroxy-3-methylbut-2-enyl diphosphate pocket. Dimethylallyl diphosphate is bound at residue His-96. His-96 provides a ligand contact to isopentenyl diphosphate. Cys-157 contributes to the [4Fe-4S] cluster binding site. Residue His-185 participates in (2E)-4-hydroxy-3-methylbut-2-enyl diphosphate binding. Dimethylallyl diphosphate is bound at residue His-185. His-185 contributes to the isopentenyl diphosphate binding site. Glu-187 serves as the catalytic Proton donor. Thr-250 serves as a coordination point for (2E)-4-hydroxy-3-methylbut-2-enyl diphosphate. Cys-288 is a binding site for [4Fe-4S] cluster. The (2E)-4-hydroxy-3-methylbut-2-enyl diphosphate site is built by Ser-317, Ser-318, Asn-319, and Ser-379. Ser-317, Ser-318, Asn-319, and Ser-379 together coordinate dimethylallyl diphosphate. 4 residues coordinate isopentenyl diphosphate: Ser-317, Ser-318, Asn-319, and Ser-379.

This sequence belongs to the IspH family. It depends on [4Fe-4S] cluster as a cofactor.

The enzyme catalyses isopentenyl diphosphate + 2 oxidized [2Fe-2S]-[ferredoxin] + H2O = (2E)-4-hydroxy-3-methylbut-2-enyl diphosphate + 2 reduced [2Fe-2S]-[ferredoxin] + 2 H(+). The catalysed reaction is dimethylallyl diphosphate + 2 oxidized [2Fe-2S]-[ferredoxin] + H2O = (2E)-4-hydroxy-3-methylbut-2-enyl diphosphate + 2 reduced [2Fe-2S]-[ferredoxin] + 2 H(+). It functions in the pathway isoprenoid biosynthesis; dimethylallyl diphosphate biosynthesis; dimethylallyl diphosphate from (2E)-4-hydroxy-3-methylbutenyl diphosphate: step 1/1. It participates in isoprenoid biosynthesis; isopentenyl diphosphate biosynthesis via DXP pathway; isopentenyl diphosphate from 1-deoxy-D-xylulose 5-phosphate: step 6/6. In terms of biological role, catalyzes the conversion of 1-hydroxy-2-methyl-2-(E)-butenyl 4-diphosphate (HMBPP) into a mixture of isopentenyl diphosphate (IPP) and dimethylallyl diphosphate (DMAPP). Acts in the terminal step of the DOXP/MEP pathway for isoprenoid precursor biosynthesis. The chain is 4-hydroxy-3-methylbut-2-enyl diphosphate reductase from Gloeothece citriformis (strain PCC 7424) (Cyanothece sp. (strain PCC 7424)).